Consider the following 274-residue polypeptide: Coat protein (274 aa).

The interval 88 to 112 is disordered; that stretch reads RPAKQVLKGSSSKSQQRDEGEVVFT. Residues 102–112 show a composition bias toward basic and acidic residues; the sequence is QQRDEGEVVFT.

The protein resides in the virion. This Rubus idaeus (Raspberry) protein is Coat protein.